A 528-amino-acid chain; its full sequence is MHSSNVSTHGMAVAPHHLASQSALAILREGGSAIEAMVAAAAAIAVVYPHMNGLGGDGFWLIVPPEGDPIAIDASGAAGSLATLEAYAGQRHIPNRGPQAALTVAGTVSGWVEALRISRDLTGRALPVARLLADAIGYAEDGIPVTASQAHATASKLEELRHQPGFSETWLVAGEAPRPGSRFRQPALAGTLRMLASDGLDSFYRGPLAERLAQGMAALGMPITLGDLQAHRARRPGPLTLQHQQGTLWNLAPPTQGLVSLAILGITDRLKMADADDAQTVHRIVEATKRAFALRDAHITDPRHLDVDVQQLLTPEALQPLADSIDDASASPWGGGKGPGDTVWMGVVDNSGLAVSFIQSIYHEFGSGVVLPDTGIVWQNRGAAFSLDPQHLLALAPGKQPFHTLNPAAARLNDGRVMVYGSMGGDGQPQTQAALFTRYILQGVPLQESISRPRWLLGRTWGQSSDSLKLEGRFAPACIARLRELGHDVEVLADFSEAMGHAGAIVRHPNGLLEGATDPRSNGAAAGY.

Thr342 (nucleophile) is an active-site residue. Gly424–Gly425 contacts substrate.

It belongs to the gamma-glutamyltransferase family. As to quaternary structure, heterodimer that consists of a 35.5 kDa large (alpha) subunit and a 20 kDa small (beta) subunit, which are synthesized from a single polypeptide. Post-translationally, cleaved by autocatalysis into a large (alpha) and a small (beta) subunit.

It carries out the reaction oxamate + H2O = oxalate + NH4(+). In terms of biological role, involved in the uric acid degradation pathway. Catalyzes the conversion of oxamate to oxalate. The polypeptide is Oxamate amidohydrolase proenzyme (Klebsiella pneumoniae subsp. pneumoniae (strain ATCC 700721 / MGH 78578)).